Consider the following 543-residue polypeptide: Tubby-related protein 1 (543 aa).

The tract at residues 1-290 (MPLQEETLRE…RASSPPVEVG (290 aa)) is disordered. 2 stretches are compositionally biased toward basic and acidic residues: residues 46 to 56 (PETPDSLESKP) and 86 to 99 (FLRDPEAKKRDPRE). Composition is skewed to acidic residues over residues 110–132 (GGEENSEEDSDDDDNDDDEEEEE) and 244–255 (KKEEEEEVEEEV). Over residues 267–276 (GRAKGKGKKK) the composition is skewed to basic residues.

It belongs to the TUB family. In terms of assembly, homodimer. May interact with ABCF1, PSIP1, ZEB1 and HMGB2 (Potential). Interacts with F-actin. Interacts with DNM1. Interacts with TUB. Interacts with TYRO3. As to expression, retina specific. Detected in the outer plexiform layer in photoreceptor cells (at protein level).

Its subcellular location is the cytoplasm. The protein localises to the cell membrane. It localises to the secreted. It is found in the synapse. Required for normal development of photoreceptor synapses. Required for normal photoreceptor function and for long-term survival of photoreceptor cells. Interacts with cytoskeleton proteins and may play a role in protein transport in photoreceptor cells. Binds lipids, especially phosphatidylinositol 3-phosphate, phosphatidylinositol 4-phosphate, phosphatidylinositol 5-phosphate, phosphatidylinositol 3,4-bisphosphate, phosphatidylinositol 4,5-bisphosphate, phosphatidylinositol 3,4,5-bisphosphate, phosphatidylserine and phosphatidic acid (in vitro). Contribute to stimulation of phagocytosis of apoptotic retinal pigment epithelium (RPE) cells and macrophages. This Mus musculus (Mouse) protein is Tubby-related protein 1 (Tulp1).